The chain runs to 123 residues: Large ribosomal subunit protein bL12 (123 aa).

This sequence belongs to the bacterial ribosomal protein bL12 family. Homodimer. Part of the ribosomal stalk of the 50S ribosomal subunit. Forms a multimeric L10(L12)X complex, where L10 forms an elongated spine to which 2 to 4 L12 dimers bind in a sequential fashion. Binds GTP-bound translation factors.

Its function is as follows. Forms part of the ribosomal stalk which helps the ribosome interact with GTP-bound translation factors. Is thus essential for accurate translation. This is Large ribosomal subunit protein bL12 from Bacillus licheniformis (strain ATCC 14580 / DSM 13 / JCM 2505 / CCUG 7422 / NBRC 12200 / NCIMB 9375 / NCTC 10341 / NRRL NRS-1264 / Gibson 46).